Consider the following 371-residue polypeptide: Probable dual-specificity RNA methyltransferase RlmN (371 aa).

Residue E113 is the Proton acceptor of the active site. The 234-residue stretch at 119-352 (QSWGNSVCVT…TTVRREMGGE (234 aa)) folds into the Radical SAM core domain. The cysteines at positions 126 and 357 are disulfide-linked. Positions 133, 137, and 140 each coordinate [4Fe-4S] cluster. Residues 182–183 (GE), S214, 237–239 (SLH), and N313 contribute to the S-adenosyl-L-methionine site. C357 serves as the catalytic S-methylcysteine intermediate.

Belongs to the radical SAM superfamily. RlmN family. Requires [4Fe-4S] cluster as cofactor.

The protein localises to the cytoplasm. The enzyme catalyses adenosine(2503) in 23S rRNA + 2 reduced [2Fe-2S]-[ferredoxin] + 2 S-adenosyl-L-methionine = 2-methyladenosine(2503) in 23S rRNA + 5'-deoxyadenosine + L-methionine + 2 oxidized [2Fe-2S]-[ferredoxin] + S-adenosyl-L-homocysteine. The catalysed reaction is adenosine(37) in tRNA + 2 reduced [2Fe-2S]-[ferredoxin] + 2 S-adenosyl-L-methionine = 2-methyladenosine(37) in tRNA + 5'-deoxyadenosine + L-methionine + 2 oxidized [2Fe-2S]-[ferredoxin] + S-adenosyl-L-homocysteine. Functionally, specifically methylates position 2 of adenine 2503 in 23S rRNA and position 2 of adenine 37 in tRNAs. This Symbiobacterium thermophilum (strain DSM 24528 / JCM 14929 / IAM 14863 / T) protein is Probable dual-specificity RNA methyltransferase RlmN.